The following is a 413-amino-acid chain: Elongation factor 1-alpha (413 aa).

A tr-type G domain is found at 5–211 (KEHMNLAFIG…DDLEAPEKPV (207 aa)). The segment at 14 to 21 (GHVDHGKS) is G1. Residue 14–21 (GHVDHGKS) coordinates GTP. Ser-21 contributes to the Mg(2+) binding site. The interval 60-64 (GVTID) is G2. Residues 81–84 (DCPG) are G3. Residues 81 to 85 (DCPGH) and 136 to 139 (NKMD) each bind GTP. Positions 136–139 (NKMD) are G4. Positions 175 to 177 (SAF) are G5.

The protein belongs to the TRAFAC class translation factor GTPase superfamily. Classic translation factor GTPase family. EF-Tu/EF-1A subfamily.

The protein resides in the cytoplasm. It carries out the reaction GTP + H2O = GDP + phosphate + H(+). GTP hydrolase that promotes the GTP-dependent binding of aminoacyl-tRNA to the A-site of ribosomes during protein biosynthesis. The chain is Elongation factor 1-alpha from Methanothermobacter thermautotrophicus (strain ATCC 29096 / DSM 1053 / JCM 10044 / NBRC 100330 / Delta H) (Methanobacterium thermoautotrophicum).